The primary structure comprises 1333 residues: ABC transporter ATP-binding protein/permease PDR18 (1333 aa).

A helical transmembrane segment spans residues 13–33 (FLEGQTFGDILCLPWTIIKGI). The ABC transporter 1 domain maps to 30–281 (IKGIRERKNR…FENMGYLCPP (252 aa)). Residues N48, N144, N205, and N350 are each glycosylated (N-linked (GlcNAc...) asparagine). Helical transmembrane passes span 392 to 412 (YTVINTCAAIAQAFITGSLFY), 425 to 445 (SGVLFFSLLYYSLMGLANISF), 474 to 494 (FPFRMIGLTFFIIILYFLAGL), 499 to 519 (GAFFTMYLLLTMCSEAITSLF), 534 to 554 (SIAGVVMLSIAMYSTYMIQLP), and 642 to 662 (FGIMWCFLIGYIVLRAVFTEY). Residues N697 and N733 are each glycosylated (N-linked (GlcNAc...) asparagine). An ABC transporter 2 domain is found at 729–971 (FIWKNVSFTI…VIKYFEKNGA (243 aa)). Position 765 to 772 (765 to 772 (GESGAGKT)) interacts with ATP. The N-linked (GlcNAc...) asparagine glycan is linked to N958. A run of 6 helical transmembrane segments spans residues 1071-1091 (LLMISGLFIGFTFFHVGVNAI), 1092-1112 (GLQNSLFACFMAIVISAPATN), 1150-1170 (PYHLLFSTIFFVSSYFPLGVF), 1178-1198 (VFYLNYAILFQLYYIGLALMI), 1210-1230 (VIVGFILSFLLSFCGAVQPAS), and 1235-1255 (FWTFMWKLSPYTYFLQNLVGL). N-linked (GlcNAc...) asparagine glycosylation occurs at N1320.

Belongs to the ABC transporter superfamily. ABCG family. PDR (TC 3.A.1.205) subfamily.

It localises to the membrane. In Saccharomyces cerevisiae (strain ATCC 204508 / S288c) (Baker's yeast), this protein is ABC transporter ATP-binding protein/permease PDR18 (PDR18).